The following is a 338-amino-acid chain: DNA-directed RNA polymerase subunit alpha (338 aa).

Positions methionine 1 to asparagine 225 are alpha N-terminal domain (alpha-NTD). An alpha C-terminal domain (alpha-CTD) region spans residues tyrosine 242–glutamate 338. The tract at residues phenylalanine 314–glutamate 338 is disordered.

Belongs to the RNA polymerase alpha chain family. In terms of assembly, homodimer. The RNAP catalytic core consists of 2 alpha, 1 beta, 1 beta' and 1 omega subunit. When a sigma factor is associated with the core the holoenzyme is formed, which can initiate transcription.

It catalyses the reaction RNA(n) + a ribonucleoside 5'-triphosphate = RNA(n+1) + diphosphate. Its function is as follows. DNA-dependent RNA polymerase catalyzes the transcription of DNA into RNA using the four ribonucleoside triphosphates as substrates. The chain is DNA-directed RNA polymerase subunit alpha from Corynebacterium diphtheriae (strain ATCC 700971 / NCTC 13129 / Biotype gravis).